The primary structure comprises 331 residues: tRNA-cytidine(32) 2-sulfurtransferase (331 aa).

A disordered region spans residues 1–33 (MNAPHMNDTAADAATLDDAAAPAGRPALTRREQ). Low complexity predominate over residues 8 to 23 (DTAADAATLDDAAAPA). A PP-loop motif motif is present at residues 71–76 (SGGKDS). [4Fe-4S] cluster is bound by residues Cys-146, Cys-149, and Cys-237.

It belongs to the TtcA family. As to quaternary structure, homodimer. It depends on Mg(2+) as a cofactor. [4Fe-4S] cluster serves as cofactor.

Its subcellular location is the cytoplasm. It catalyses the reaction cytidine(32) in tRNA + S-sulfanyl-L-cysteinyl-[cysteine desulfurase] + AH2 + ATP = 2-thiocytidine(32) in tRNA + L-cysteinyl-[cysteine desulfurase] + A + AMP + diphosphate + H(+). The protein operates within tRNA modification. In terms of biological role, catalyzes the ATP-dependent 2-thiolation of cytidine in position 32 of tRNA, to form 2-thiocytidine (s(2)C32). The sulfur atoms are provided by the cysteine/cysteine desulfurase (IscS) system. The protein is tRNA-cytidine(32) 2-sulfurtransferase of Burkholderia orbicola (strain MC0-3).